The chain runs to 888 residues: Calcium-transporting ATPase 1 (888 aa).

The next 4 helical transmembrane spans lie at 53–75 (IFAQ…SAFV), 79–97 (ADAS…IGVV), 246–266 (VGKY…LIGF), and 283–303 (AVAA…AIGV). Ca(2+) contacts are provided by valine 284, alanine 285, isoleucine 287, and glutamate 289. Aspartate 331 acts as the 4-aspartylphosphate intermediate in catalysis. Helical transmembrane passes span 675-695 (ILFL…AILL), 703-723 (PIHI…SLGV), 747-767 (VPFL…AFIA), 791-811 (LLHA…VHSF), 831-851 (LVFS…IPPL), and 865-885 (WGFV…IKLA). Ca(2+) is bound by residues asparagine 710 and aspartate 714.

The protein belongs to the cation transport ATPase (P-type) (TC 3.A.3) family. Type IIA subfamily.

It is found in the cell membrane. The catalysed reaction is Ca(2+)(in) + ATP + H2O = Ca(2+)(out) + ADP + phosphate + H(+). Its activity is regulated as follows. Inhibited by cyclopiazonic acid (CPA). Functionally, catalyzes the hydrolysis of ATP coupled with the transport of calcium. This chain is Calcium-transporting ATPase 1, found in Bacillus cereus (strain ATCC 10987 / NRS 248).